The chain runs to 155 residues: Protein-export protein SecB (155 aa).

It belongs to the SecB family. In terms of assembly, homotetramer, a dimer of dimers. One homotetramer interacts with 1 SecA dimer.

It is found in the cytoplasm. In terms of biological role, one of the proteins required for the normal export of preproteins out of the cell cytoplasm. It is a molecular chaperone that binds to a subset of precursor proteins, maintaining them in a translocation-competent state. It also specifically binds to its receptor SecA. The sequence is that of Protein-export protein SecB from Vibrio atlanticus (strain LGP32) (Vibrio splendidus (strain Mel32)).